The primary structure comprises 198 residues: Small ribosomal subunit protein eS1 (198 aa).

The protein belongs to the eukaryotic ribosomal protein eS1 family.

This Methanosphaerula palustris (strain ATCC BAA-1556 / DSM 19958 / E1-9c) protein is Small ribosomal subunit protein eS1.